Here is a 387-residue protein sequence, read N- to C-terminus: Putative transposase y4pF/y4sB (387 aa).

Belongs to the transposase 20 family.

The polypeptide is Putative transposase y4pF/y4sB (Sinorhizobium fredii (strain NBRC 101917 / NGR234)).